We begin with the raw amino-acid sequence, 437 residues long: UDP-glucosyl transferase 79L3 (437 aa).

His-18 (proton acceptor) is an active-site residue. Residue Asp-117 is the Charge relay of the active site. Positions 254, 312, 313, 330, 335, and 338 each coordinate UDP.

It belongs to the UDP-glycosyltransferase family. Mainly expressed in flowers, flower buds and young leaves, and, to a lesser extent, in old leaves, stems and roots.

It participates in secondary metabolite biosynthesis; terpenoid biosynthesis. Its function is as follows. Component of the oleanane-type triterpene saponins (e.g. saponarioside A and saponarioside B) biosynthetic pathway, leading to the production of natural products with detergent properties used as traditional sources of soap. A glycosyltransferase that mediates the conversion of QA-triFR to QA-triFRX via the elongation of the C-28 sugar chain with a D-xylose. The protein is UDP-glucosyl transferase 79L3 of Saponaria officinalis (Common soapwort).